Here is a 1567-residue protein sequence, read N- to C-terminus: ABC multidrug transporter MDR1 (1567 aa).

A compositionally biased stretch (pro residues) spans 1-11 (MASQPPQPPSG). The segment at 1–37 (MASQPPQPPSGQPDTQYEEYQSEVITETTNRPTPAAD) is disordered. The span at 22–32 (SEVITETTNRP) shows a compositional bias: polar residues. 3 N-linked (GlcNAc...) asparagine glycosylation sites follow: asparagine 149, asparagine 157, and asparagine 356. The region spanning 167–432 (VQYQDTFLSP…FEEMGWYCPP (266 aa)) is the ABC transporter 1 domain. Transmembrane regions (helical) follow at residues 543-563 (STIA…SLFF), 571-591 (GFFA…LMSI), 636-656 (IPIK…LGGL), 661-681 (AKFF…SAIF), 691-711 (IPQA…YTGF), and 798-818 (LGIL…VSEL). Residues asparagine 819, asparagine 895, and asparagine 912 are each glycosylated (N-linked (GlcNAc...) asparagine). One can recognise an ABC transporter 2 domain in the interval 891-1134 (FTWRNVTYDI…LLNYFETHGA (244 aa)). ATP is bound at residue 927–934 (GVSGAGKT). Residues 1172–1202 (ESRHVQQELDRIQSETSKRNEGHGQSAEKEP) are disordered. Residues 1231 to 1251 (IWGKLLLGLASALFIGFSFFL) form a helical membrane-spanning segment. An N-linked (GlcNAc...) asparagine glycan is attached at asparagine 1253. A run of 5 helical transmembrane segments spans residues 1257-1277 (AGLQ…SSLV), 1305-1325 (VFLL…GIIA), 1345-1365 (ILLL…QMII), 1372-1392 (ETAG…NGVL), and 1498-1518 (GIGW…YYLI).

Belongs to the ABC transporter superfamily. ABCG family. PDR (TC 3.A.1.205) subfamily.

Its subcellular location is the cell membrane. It carries out the reaction voriconazole(in) + ATP + H2O = voriconazole(out) + ADP + phosphate + H(+). The catalysed reaction is fluconazole(in) + ATP + H2O = fluconazole(out) + ADP + phosphate + H(+). The enzyme catalyses (R)-miconazole(in) + ATP + H2O = (R)-miconazole(out) + ADP + phosphate + H(+). It catalyses the reaction (S)-miconazole(in) + ATP + H2O = (S)-miconazole(out) + ADP + phosphate + H(+). Pleiotropic ABC efflux transporter that may be involved in the modulation susceptibility to a wide range of unrelated cytotoxic compounds, including ethidium bromide, ketoconazole, cycloheximide, fluconazole, griseofulvin, imazalil and itraconazole. The chain is ABC multidrug transporter MDR1 from Trichophyton interdigitale (strain MR816).